Reading from the N-terminus, the 328-residue chain is scyllo-inositol 2-dehydrogenase (NADP(+)) IolU (328 aa).

This sequence belongs to the Gfo/Idh/MocA family.

The enzyme catalyses scyllo-inositol + NADP(+) = scyllo-inosose + NADPH + H(+). Functionally, catalyzes the NADPH-dependent reduction of scyllo-inosose (SIS) to scyllo-inositol (SI) in vitro, but is unable to dehydrogenate scyllo-inositol and myo-inositol. Is less efficient than the functional paralog IolW. Under physiological conditions, may primarily function as an NADPH-dependent oxidoreductase that reduces carbonyl group(s) in its substrates. Cannot use NADH instead of NADPH. The sequence is that of scyllo-inositol 2-dehydrogenase (NADP(+)) IolU from Bacillus subtilis (strain 168).